A 155-amino-acid polypeptide reads, in one-letter code: Ribonuclease H (155 aa).

One can recognise an RNase H type-1 domain in the interval 1-142 (MLKQVEIFTD…CDELARAAAM (142 aa)). Mg(2+) contacts are provided by Asp-10, Glu-48, Asp-70, and Asp-134.

It belongs to the RNase H family. As to quaternary structure, monomer. Requires Mg(2+) as cofactor.

It is found in the cytoplasm. The catalysed reaction is Endonucleolytic cleavage to 5'-phosphomonoester.. In terms of biological role, endonuclease that specifically degrades the RNA of RNA-DNA hybrids. The chain is Ribonuclease H from Salmonella paratyphi A (strain AKU_12601).